The chain runs to 396 residues: Elongation factor Tu (396 aa).

The tr-type G domain maps to 10–206; the sequence is KPHVNIGTIG…AVDEYIPDPV (197 aa). Residues 19 to 26 are G1; that stretch reads GHVDHGKT. Residue 19 to 26 participates in GTP binding; that stretch reads GHVDHGKT. T26 lines the Mg(2+) pocket. The interval 62-66 is G2; it reads GITIN. Residues 83–86 form a G3 region; that stretch reads DAPG. Residues 83-87 and 138-141 contribute to the GTP site; these read DAPGH and NKSD. The G4 stretch occupies residues 138–141; it reads NKSD. The tract at residues 176–178 is G5; the sequence is SGL.

This sequence belongs to the TRAFAC class translation factor GTPase superfamily. Classic translation factor GTPase family. EF-Tu/EF-1A subfamily. In terms of assembly, monomer.

It localises to the cytoplasm. It catalyses the reaction GTP + H2O = GDP + phosphate + H(+). Its function is as follows. GTP hydrolase that promotes the GTP-dependent binding of aminoacyl-tRNA to the A-site of ribosomes during protein biosynthesis. This chain is Elongation factor Tu, found in Micrococcus luteus (strain ATCC 4698 / DSM 20030 / JCM 1464 / CCM 169 / CCUG 5858 / IAM 1056 / NBRC 3333 / NCIMB 9278 / NCTC 2665 / VKM Ac-2230) (Micrococcus lysodeikticus).